Reading from the N-terminus, the 601-residue chain is Alpha-terpineol synthase, chloroplastic (601 aa).

Residues 1–47 (MSTISIHHVGILRNPLHSKSKRASINKPWSLSLPRSSSASRLVEPCR) constitute a chloroplast transit peptide. Mn(2+) contacts are provided by D357 and D361. Positions 357–361 (DDVYD) match the DDXXD motif motif. Homodimerization stretches follow at residues 363–369 (YGTLDEL) and 435–471 (EAEWYQSGYTPSLEEYLTIAKISIGSLPILLSVELSL). Mn(2+)-binding residues include D499 and E507.

This sequence belongs to the terpene synthase family. Homodimer. Requires Mn(2+) as cofactor. Mg(2+) is required as a cofactor.

The protein localises to the plastid. Its subcellular location is the chloroplast. The catalysed reaction is (2E)-geranyl diphosphate + H2O = (S)-alpha-terpineol + diphosphate. It catalyses the reaction (2E)-geranyl diphosphate + H2O = (R)-alpha-terpineol + diphosphate. The protein operates within secondary metabolite biosynthesis; terpenoid biosynthesis. Involved in the biosynthesis of phenolic monoterpenes natural products. Monoterpene synthase which catalyzes the conversion of geranyl diphosphate (GPP) to alpha-terpineol (isomer is not determined). The polypeptide is Alpha-terpineol synthase, chloroplastic (Thymus caespititius (Cretan thyme)).